The primary structure comprises 365 residues: ATP-dependent (S)-NAD(P)H-hydrate dehydratase (365 aa).

The N-terminal 43 residues, methionine 1–arginine 43, are a transit peptide targeting the chloroplast. Leucine 2 is modified (N-acetylserine). The YjeF C-terminal domain maps to alanine 53–isoleucine 361. Residues glycine 169 and asparagine 222 to arginine 228 contribute to the (6S)-NADPHX site. ATP is bound by residues lysine 262–aspartate 266 and glycine 281–glycine 290. Aspartate 291 contacts (6S)-NADPHX.

Belongs to the NnrD/CARKD family. The cofactor is Mg(2+).

The protein resides in the plastid. The protein localises to the chloroplast. It localises to the cytoplasm. The catalysed reaction is (6S)-NADHX + ATP = ADP + phosphate + NADH + H(+). It catalyses the reaction (6S)-NADPHX + ATP = ADP + phosphate + NADPH + H(+). Its function is as follows. Catalyzes the dehydration of the S-form of NAD(P)HX at the expense of ATP, which is converted to ADP. Together with NAD(P)HX epimerase, which catalyzes the epimerization of the S- and R-forms, the enzyme allows the repair of both epimers of NAD(P)HX, a damaged form of NAD(P)H that is a result of enzymatic or heat-dependent hydration. In Arabidopsis thaliana (Mouse-ear cress), this protein is ATP-dependent (S)-NAD(P)H-hydrate dehydratase.